The primary structure comprises 156 residues: S-ribosylhomocysteine lyase (156 aa).

3 residues coordinate Fe cation: His-56, His-60, and Cys-123.

This sequence belongs to the LuxS family. In terms of assembly, homodimer. Fe cation is required as a cofactor.

The enzyme catalyses S-(5-deoxy-D-ribos-5-yl)-L-homocysteine = (S)-4,5-dihydroxypentane-2,3-dione + L-homocysteine. Its function is as follows. Involved in the synthesis of autoinducer 2 (AI-2) which is secreted by bacteria and is used to communicate both the cell density and the metabolic potential of the environment. The regulation of gene expression in response to changes in cell density is called quorum sensing. Catalyzes the transformation of S-ribosylhomocysteine (RHC) to homocysteine (HC) and 4,5-dihydroxy-2,3-pentadione (DPD). The chain is S-ribosylhomocysteine lyase from Staphylococcus haemolyticus (strain JCSC1435).